A 130-amino-acid chain; its full sequence is MTLLDPLANALSHITNSERVGKREVYIKPASKLIGEVLRVMQKYGYIGEFEFIDDGRAGVYRVQLLGKINKAGAIKPRFPVKARDYERWEKRFLPAFEFGILIVSTSQGVMSHKEAREKGIGGRLIAYVY.

Belongs to the universal ribosomal protein uS8 family. In terms of assembly, part of the 30S ribosomal subunit.

Its function is as follows. One of the primary rRNA binding proteins, it binds directly to 16S rRNA central domain where it helps coordinate assembly of the platform of the 30S subunit. This chain is Small ribosomal subunit protein uS8, found in Pyrococcus abyssi (strain GE5 / Orsay).